The following is a 228-amino-acid chain: Superoxide dismutase [Mn], mitochondrial (228 aa).

Residues 1–24 (MALRTLVSRRTLATGLGFRQQLRG) constitute a mitochondrion transit peptide. Histidine 52, histidine 100, aspartate 189, and histidine 193 together coordinate Mn(2+).

The protein belongs to the iron/manganese superoxide dismutase family. As to quaternary structure, homotetramer. Mn(2+) is required as a cofactor. In terms of tissue distribution, expressed most abundantly in parts of the plant which exhibit a high metabolic activity. Expressed in pre-shooting flower buds, vegetative buds, immature fruits and fully expanded leaves of basal shoots and seedlings.

The protein localises to the mitochondrion matrix. The enzyme catalyses 2 superoxide + 2 H(+) = H2O2 + O2. Functionally, destroys superoxide anion radicals which are normally produced within the cells and which are toxic to biological systems. This chain is Superoxide dismutase [Mn], mitochondrial (SOD), found in Prunus persica (Peach).